The sequence spans 142 residues: MFQGASALTLDAKGRMSIPTRHREALQLQAEGRVTVTKHPDGCLMLFPRPEWERFRERIAALPMEAHWWKRIFLGSAADVELDTAGRVLITPELRLAATLERDVMLLGMGSHFEIWDAATYTAKEQAAMAQGMPDALKNFSF.

SpoVT-AbrB domains are found at residues 5–51 and 77–120; these read ASAL…PRPE and AADV…DAAT.

It belongs to the MraZ family. Forms oligomers.

It is found in the cytoplasm. It localises to the nucleoid. The protein is Transcriptional regulator MraZ of Ralstonia nicotianae (strain ATCC BAA-1114 / GMI1000) (Ralstonia solanacearum).